We begin with the raw amino-acid sequence, 198 residues long: Proteasome subunit beta 1 (198 aa).

Positions 1-8 are cleaved as a propeptide — removed in mature form; by autocatalysis; the sequence is MSMYMPGA. The active-site Nucleophile is Thr-9.

It belongs to the peptidase T1B family. As to quaternary structure, the 20S proteasome core is composed of 14 alpha and 14 beta subunits that assemble into four stacked heptameric rings, resulting in a barrel-shaped structure. The two inner rings, each composed of seven catalytic beta subunits, are sandwiched by two outer rings, each composed of seven alpha subunits. The catalytic chamber with the active sites is on the inside of the barrel. Has a gated structure, the ends of the cylinder being occluded by the N-termini of the alpha-subunits. Is capped at one or both ends by the proteasome regulatory ATPase, PAN.

Its subcellular location is the cytoplasm. It carries out the reaction Cleavage of peptide bonds with very broad specificity.. With respect to regulation, the formation of the proteasomal ATPase PAN-20S proteasome complex, via the docking of the C-termini of PAN into the intersubunit pockets in the alpha-rings, triggers opening of the gate for substrate entry. Interconversion between the open-gate and close-gate conformations leads to a dynamic regulation of the 20S proteasome proteolysis activity. In terms of biological role, component of the proteasome core, a large protease complex with broad specificity involved in protein degradation. The chain is Proteasome subunit beta 1 from Nitrosopumilus maritimus (strain SCM1).